We begin with the raw amino-acid sequence, 526 residues long: ATP synthase subunit alpha (526 aa).

Residue Gly-171 to Thr-178 participates in ATP binding.

This sequence belongs to the ATPase alpha/beta chains family. F-type ATPases have 2 components, CF(1) - the catalytic core - and CF(0) - the membrane proton channel. CF(1) has five subunits: alpha(3), beta(3), gamma(1), delta(1), epsilon(1). CF(0) has four main subunits: a, b, b' and c.

Its subcellular location is the cell inner membrane. The catalysed reaction is ATP + H2O + 4 H(+)(in) = ADP + phosphate + 5 H(+)(out). Produces ATP from ADP in the presence of a proton gradient across the membrane. The alpha chain is a regulatory subunit. The polypeptide is ATP synthase subunit alpha (Chlorobium phaeobacteroides (strain BS1)).